The sequence spans 584 residues: Acetylcholinesterase (584 aa).

Residue Ala1 is a signal peptide. The cysteines at positions 70 and 97 are disulfide-linked. The Acyl-ester intermediate role is filled by Ser204. Cys258 and Cys273 are disulfide-bonded. N-linked (GlcNAc...) asparagine glycosylation is present at Asn266. The active-site Charge relay system is the Glu335. N-linked (GlcNAc...) asparagine glycosylation is present at Asn351. Cys410 and Cys530 form a disulfide bridge. Residue His448 is the Charge relay system of the active site. N-linked (GlcNAc...) asparagine glycosylation occurs at Asn465.

The protein belongs to the type-B carboxylesterase/lipase family. In terms of assembly, homotetramer; composed of disulfide-linked homodimers. Interacts with PRIMA1. The interaction with PRIMA1 is required to anchor it to the basal lamina of cells and organize into tetramers.

The protein localises to the synapse. It is found in the secreted. Its subcellular location is the cell membrane. The catalysed reaction is acetylcholine + H2O = choline + acetate + H(+). Functionally, terminates signal transduction at the neuromuscular junction by rapid hydrolysis of the acetylcholine released into the synaptic cleft. This chain is Acetylcholinesterase (ACHE), found in Oryctolagus cuniculus (Rabbit).